A 201-amino-acid chain; its full sequence is Akirin-2 (201 aa).

Phosphoserine is present on residues Ser18 and Ser21. A Nuclear localization signal motif is present at residues 23–28 (KRRRCA). Ser55 is modified (phosphoserine). An SYVS motif motif is present at residues 198-201 (SYVS).

It belongs to the akirin family. As to quaternary structure, homodimer. Interacts with IPO9; the interaction is direct. Associates with 20S and 26S proteasomes. Interacts with SMARCD1; promoting SWI/SNF complex recruitment. Interacts with NFKBIZ. Interacts with YWHAB. Polyubiquitinated. Polyubiquitination is dependent of UBR5 that extends pre-ubiquitinated AKIRIN2.

It localises to the nucleus. It is found in the cytoplasm. The protein resides in the membrane. Molecular adapter that acts as a bridge between a variety of multiprotein complexes, and which is involved in embryonic development, immunity, myogenesis and brain development. Plays a key role in nuclear protein degradation by promoting import of proteasomes into the nucleus: directly binds to fully assembled 20S proteasomes at one end and to nuclear import receptor IPO9 at the other end, bridging them together and mediating the import of pre-assembled proteasome complexes through the nuclear pore. Involved in innate immunity by regulating the production of interleukin-6 (IL6) downstream of Toll-like receptor (TLR): acts by bridging the NF-kappa-B inhibitor NFKBIZ and the SWI/SNF complex, leading to promote induction of IL6. Also involved in adaptive immunity by promoting B-cell activation. Involved in brain development: required for the survival and proliferation of cerebral cortical progenitor cells. Involved in myogenesis: required for skeletal muscle formation and skeletal development, possibly by regulating expression of muscle differentiation factors. Also plays a role in facilitating interdigital tissue regression during limb development. In Mus musculus (Mouse), this protein is Akirin-2.